Here is a 332-residue protein sequence, read N- to C-terminus: Ephrin-B2a (332 aa).

The N-terminal stretch at 1 to 24 is a signal peptide; it reads MGDSLWRYYFGVLVIACKVNLSRA. Residues Asn20 and Asn33 are each glycosylated (N-linked (GlcNAc...) asparagine). Residues 25–161 form the Ephrin RBD domain; the sequence is LILDSIYWNT…TKSMKIIMKV (137 aa). Residues 25–225 are Extracellular-facing; it reads LILDSIYWNT…VIGSEVALFA (201 aa). Cystine bridges form between Cys59–Cys98 and Cys86–Cys150. A glycan (N-linked (GlcNAc...) asparagine) is linked at Asn136. The segment at 162 to 212 is disordered; the sequence is GQNPSDPISPKDYPTSYPPKHPDLGGKDSKSNEVLKPDASPHGEDKGDGNK. Positions 181-210 are enriched in basic and acidic residues; it reads KHPDLGGKDSKSNEVLKPDASPHGEDKGDG. N-linked (GlcNAc...) asparagine glycosylation occurs at Asn211. A helical membrane pass occupies residues 226–246; that stretch reads CIASASVIVIIIIIMLVFLLL. The Cytoplasmic portion of the chain corresponds to 247-332; it reads KYRRRHRKHS…QSPANIYYKV (86 aa). The interval 255 to 285 is disordered; that stretch reads HSPQHATTLSLSTLATPKRGGSGGNNNGSEP. Residues 260-270 show a composition bias toward low complexity; that stretch reads ATTLSLSTLAT. The PDZ-binding signature appears at 330–332; it reads YKV.

Belongs to the ephrin family. As to quaternary structure, binds to the receptor tyrosine kinase ephb4. Inducible phosphorylation of tyrosine residues in the cytoplasmic domain.

The protein localises to the cell membrane. Its function is as follows. Cell surface transmembrane ligand for Eph receptors, a family of receptor tyrosine kinases which are crucial for migration, repulsion and adhesion during neuronal, vascular and epithelial development. Binds promiscuously Eph receptors residing on adjacent cells, leading to contact-dependent bidirectional signaling into neighboring cells. The signaling pathway downstream of the receptor is referred to as forward signaling while the signaling pathway downstream of the ephrin ligand is referred to as reverse signaling. Together with ephb4 may play a central role in heart morphogenesis and angiogenesis through regulation of cell adhesion and cell migration. The polypeptide is Ephrin-B2a (efnb2a) (Danio rerio (Zebrafish)).